We begin with the raw amino-acid sequence, 211 residues long: Urease accessory protein UreF (211 aa).

Residues 71 to 93 (DDADRETDARTPAPAARHASRSQ) form a disordered region.

The protein belongs to the UreF family. In terms of assembly, ureD, UreF and UreG form a complex that acts as a GTP-hydrolysis-dependent molecular chaperone, activating the urease apoprotein by helping to assemble the nickel containing metallocenter of UreC. The UreE protein probably delivers the nickel.

The protein resides in the cytoplasm. Functionally, required for maturation of urease via the functional incorporation of the urease nickel metallocenter. The sequence is that of Urease accessory protein UreF from Mycobacterium tuberculosis (strain ATCC 25177 / H37Ra).